We begin with the raw amino-acid sequence, 484 residues long: Protein LAZ1 homolog 1 (484 aa).

Positions 1–19 are cleaved as a signal peptide; sequence MEWRGILCSLLFIVSVGES. Transmembrane regions (helical) follow at residues 42–62, 76–96, 190–210, 219–239, 264–284, and 299–319; these read PILS…YLIF, FLIG…LSLV, MILK…GVYG, GYPY…YCLV, IVFL…MGLV, and YIIC…FPAA. A disordered region spans residues 344–364; the sequence is PDPEEVKDSERTTRTRYGRHD. A compositionally biased stretch (basic and acidic residues) spans 347–364; that stretch reads EEVKDSERTTRTRYGRHD. Residues 406 to 428 are a coiled coil; the sequence is IAKINRTFHQISENVKRFEQQKK. A disordered region spans residues 459-484; that stretch reads VSDSGLGSTNRHHQSRVSGLWTRMRR.

It belongs to the TMEM184 family.

Its subcellular location is the membrane. The polypeptide is Protein LAZ1 homolog 1 (Arabidopsis thaliana (Mouse-ear cress)).